A 1046-amino-acid chain; its full sequence is Piwi-like protein 2 (1046 aa).

Positions 1–12 (MDPKRPTFPSPP) are enriched in pro residues. A disordered region spans residues 1–35 (MDPKRPTFPSPPGVIRAPWQQSTEDQSQLLDQPSL). The segment covering 19–31 (WQQSTEDQSQLLD) has biased composition (polar residues). In terms of domain architecture, PAZ spans 462–575 (SVLDVMNLIY…LLPELSFMTG (114 aa)). Residues 741–1032 (LVVCIMTGNR…LAFLSGQYLH (292 aa)) enclose the Piwi domain. Catalysis depends on residues Asp-818, Glu-856, Asp-888, and His-1021.

Belongs to the argonaute family. Piwi subfamily. Component of the PET complex. Mg(2+) serves as cofactor. Post-translationally, methylated on arginine residues; required for the interaction with Tudor domain-containing protein and subsequent localization to the meiotic nuage, also named P granule. As to expression, detected in primordial germ cells (PGCs) from 3 dpf. In adult, it is found in both the female and male gonad. In the ovary, it is present in all stages of germ cell differentiation. In testis, it is present in mitotic and meiotic germ cells. No protein has been detected in the fully differentiated sperm cell.

It is found in the cytoplasm. The protein resides in the nucleus. Endoribonuclease that plays a central role during spermatogenesis by repressing transposable elements and preventing their mobilization, which is essential for the germline integrity. Plays an essential role in germ cell differentiation and meiosis, independently of the function in transposable elements repression. Acts via the piRNA metabolic process, which mediates the repression of transposable elements during meiosis by forming complexes composed of piRNAs and Piwi proteins and govern the methylation and subsequent repression of transposons. During piRNA biosynthesis, plays a key role in the piRNA amplification loop, also named ping-pong amplification cycle, by acting as a 'slicer-competent' piRNA endoribonuclease that cleaves primary piRNAs, which are then loaded onto 'slicer-incompetent' piwil4. Piwil2 slicing produces a pre-miRNA intermediate, which is then processed in mature piRNAs, and as well as a 16 nucleotide by-product that is degraded. Required for piwil4/miwi2 nuclear localization and association with secondary piRNAs antisense. Represses circadian rhythms by promoting the stability and activity of core clock components BMAL1 and CLOCK. The protein is Piwi-like protein 2 (piwil2) of Danio rerio (Zebrafish).